The chain runs to 366 residues: tRNA/tmRNA (uracil-C(5))-methyltransferase (366 aa).

Positions 190, 218, 223, 239, and 299 each coordinate S-adenosyl-L-methionine. Cys-324 (nucleophile) is an active-site residue. Glu-358 serves as the catalytic Proton acceptor.

The protein belongs to the class I-like SAM-binding methyltransferase superfamily. RNA M5U methyltransferase family. TrmA subfamily.

It catalyses the reaction uridine(54) in tRNA + S-adenosyl-L-methionine = 5-methyluridine(54) in tRNA + S-adenosyl-L-homocysteine + H(+). The enzyme catalyses uridine(341) in tmRNA + S-adenosyl-L-methionine = 5-methyluridine(341) in tmRNA + S-adenosyl-L-homocysteine + H(+). Its function is as follows. Dual-specificity methyltransferase that catalyzes the formation of 5-methyluridine at position 54 (m5U54) in all tRNAs, and that of position 341 (m5U341) in tmRNA (transfer-mRNA). This is tRNA/tmRNA (uracil-C(5))-methyltransferase from Salmonella newport (strain SL254).